Consider the following 426-residue polypeptide: Glutamate-1-semialdehyde 2,1-aminomutase (426 aa).

K265 bears the N6-(pyridoxal phosphate)lysine mark.

The protein belongs to the class-III pyridoxal-phosphate-dependent aminotransferase family. HemL subfamily. Homodimer. It depends on pyridoxal 5'-phosphate as a cofactor.

It localises to the cytoplasm. The catalysed reaction is (S)-4-amino-5-oxopentanoate = 5-aminolevulinate. It functions in the pathway porphyrin-containing compound metabolism; protoporphyrin-IX biosynthesis; 5-aminolevulinate from L-glutamyl-tRNA(Glu): step 2/2. The protein is Glutamate-1-semialdehyde 2,1-aminomutase of Yersinia pseudotuberculosis serotype O:1b (strain IP 31758).